Consider the following 495-residue polypeptide: Genome polyprotein (495 aa).

Topologically, residues 1–445 (MRCIGISNRD…LNQVFGTIYG (445 aa)) are extracellular. 4 disulfide bridges follow: Cys3-Cys30, Cys60-Cys121, Cys74-Cys105, and Cys92-Cys116. The N-linked (GlcNAc...) asparagine; by host glycan is linked to Asn67. The interval 98 to 111 (DRGWGNGCGLFGKG) is fusion peptide. Residue Asn153 is glycosylated (N-linked (GlcNAc...) asparagine; by host). Disulfide bonds link Cys185–Cys285 and Cys302–Cys333. A helical transmembrane segment spans residues 446 to 466 (AAFSGVSWTMKILIGVIITCI). The Cytoplasmic segment spans residues 467–472 (GMNSRS). Residues 473 to 493 (TSLSVSLVLVGVVTLYLGGMV) form a helical membrane-spanning segment. Topologically, residues 494–495 (HA) are extracellular.

In terms of assembly, homodimer; in the endoplasmic reticulum and Golgi. Interacts with protein prM. Interacts with non-structural protein 1. Post-translationally, N-glycosylated. Specific enzymatic cleavages in vivo yield mature proteins. Cleavages in the lumen of endoplasmic reticulum are performed by host signal peptidase, wereas cleavages in the cytoplasmic side are performed by serine protease NS3. Signal cleavage at the 2K-4B site requires a prior NS3 protease-mediated cleavage at the 4A-2K site.

The protein localises to the virion membrane. Its subcellular location is the host endoplasmic reticulum membrane. Functionally, binds to host cell surface receptor and mediates fusion between viral and cellular membranes. Envelope protein is synthesized in the endoplasmic reticulum in the form of heterodimer with protein prM. They play a role in virion budding in the ER, and the newly formed immature particle is covered with 60 spikes composed of heterodimer between precursor prM and envelope protein E. The virion is transported to the Golgi apparatus where the low pH causes dissociation of PrM-E heterodimers and formation of E homodimers. prM-E cleavage is inefficient, and many virions are only partially matured. These uncleaved prM would play a role in immune evasion. This is Genome polyprotein from Aedes aegypti (Yellowfever mosquito).